The primary structure comprises 538 residues: Atos homolog protein B (538 aa).

Polar residues-rich tracts occupy residues 1-12 (MRHVQAETSPSS) and 129-141 (GGSS…SGAR). Disordered stretches follow at residues 1–98 (MRHV…EPPT), 129–185 (GGSS…QLHT), and 201–303 (LVSG…PTDC). Positions 227-238 (HTPPGPGPPGPC) are enriched in pro residues. Phosphoserine occurs at positions 254 and 255. The interval 348-430 (LLGNFEESLL…VPKVGTIQVT (83 aa)) is required for macropage invasion. The tract at residues 436–444 (QTVVKMFLV) is transactivation domain 1 (TAD1).

This sequence belongs to the ATOS family.

The protein resides in the nucleus. In terms of biological role, transcription regulator that may syncronize transcriptional and translational programs. In Bos taurus (Bovine), this protein is Atos homolog protein B.